Consider the following 432-residue polypeptide: Serine hydroxymethyltransferase (432 aa).

(6S)-5,6,7,8-tetrahydrofolate-binding positions include leucine 127 and 131–133 (GHL). Residue lysine 236 is modified to N6-(pyridoxal phosphate)lysine.

It belongs to the SHMT family. Homodimer. The cofactor is pyridoxal 5'-phosphate.

It localises to the cytoplasm. The catalysed reaction is (6R)-5,10-methylene-5,6,7,8-tetrahydrofolate + glycine + H2O = (6S)-5,6,7,8-tetrahydrofolate + L-serine. It functions in the pathway one-carbon metabolism; tetrahydrofolate interconversion. Its pathway is amino-acid biosynthesis; glycine biosynthesis; glycine from L-serine: step 1/1. Functionally, catalyzes the reversible interconversion of serine and glycine with tetrahydrofolate (THF) serving as the one-carbon carrier. This reaction serves as the major source of one-carbon groups required for the biosynthesis of purines, thymidylate, methionine, and other important biomolecules. Also exhibits THF-independent aldolase activity toward beta-hydroxyamino acids, producing glycine and aldehydes, via a retro-aldol mechanism. In Rhizobium etli (strain ATCC 51251 / DSM 11541 / JCM 21823 / NBRC 15573 / CFN 42), this protein is Serine hydroxymethyltransferase.